The sequence spans 247 residues: Submandibular gland secretory Glx-rich protein CB (247 aa).

The first 18 residues, 1–18 (MLVVLLTAALLALSSAQG), serve as a signal peptide directing secretion. Positions 14-219 (SSAQGTDEEV…PQHYRGRPPK (206 aa)) are disordered. 7 stretches are compositionally biased toward low complexity: residues 39–50 (PVDSGSDPPSAD), 58–71 (EGES…EPPA), 81–93 (QQEP…QEPP), 104–116 (QQEP…QEPP), 126–139 (QQQQ…QEPP), 150–159 (QQESTQAENQ), and 178–196 (VESP…QQTN). 5 repeat units span residues 67–89 (EEPP…QAEN), 90–112 (QEPP…QAEN), 113–135 (QEPP…QAEN), 136–158 (QEPP…QAEN), and 159–181 (QEPS…VESP). Residues 67-181 (EEPPATSGSE…QPEEGNVESP (115 aa)) are 5 X 23 AA tandem repeats. A compositionally biased stretch (basic and acidic residues) spans 197-212 (PEEKPPAPKTQEEPQH).

As to expression, submandibular gland acinar cells.

The protein localises to the secreted. Its function is as follows. GRP proteins have a marked affinity for hydroxyapatite. They may play a role in the formation of the protective acquired pellicle at the saliva-tooth interface. The polypeptide is Submandibular gland secretory Glx-rich protein CB (Grpcb) (Rattus norvegicus (Rat)).